The chain runs to 739 residues: Polyribonucleotide nucleotidyltransferase (739 aa).

Residues Asp-489 and Asp-495 each coordinate Mg(2+). A KH domain is found at 556 to 615 (PKIDTIKIDVDKIKIVIGKGGETIDKIIAETGVKIDIDEDGLVAIFSPDRAAIERTKEII). Residues 625–693 (DEVFQAKVVR…DKGRIDASMK (69 aa)) form the S1 motif domain. Positions 699-739 (PEGYVEPEKRERSEKPRRHKEHKEKKDNNFGEFKFHKVDKK) are disordered. Positions 722–739 (EKKDNNFGEFKFHKVDKK) are enriched in basic and acidic residues.

It belongs to the polyribonucleotide nucleotidyltransferase family. Requires Mg(2+) as cofactor.

Its subcellular location is the cytoplasm. The catalysed reaction is RNA(n+1) + phosphate = RNA(n) + a ribonucleoside 5'-diphosphate. In terms of biological role, involved in mRNA degradation. Catalyzes the phosphorolysis of single-stranded polyribonucleotides processively in the 3'- to 5'-direction. The chain is Polyribonucleotide nucleotidyltransferase from Streptococcus suis (strain 98HAH33).